The following is a 703-amino-acid chain: Protein FAR1-RELATED SEQUENCE 6 (703 aa).

A disordered region spans residues 1 to 29 (MERSESVDEDVQASAYLENDEVRERDDPM). Residues 99–184 (NYYNCYASEV…TLDHNHLLGC (86 aa)) form the FAR1 domain. The 96-residue stretch at 297–392 (VIFIDSSYIS…SLTHIMRKIP (96 aa)) folds into the MULE domain. The segment at 584–620 (FEVLYNRSVGEVRCICSCFNFYGYLCRHALCVLNFNG) adopts an SWIM-type zinc-finger fold.

The protein belongs to the FHY3/FAR1 family. As to expression, expressed in hypocotyls, rosette and cauline leaves, inflorescences stems, flowers and siliques.

Its subcellular location is the nucleus. Functionally, putative transcription activator involved in regulating light control of development. May have a role in controlling flowering time. This chain is Protein FAR1-RELATED SEQUENCE 6 (FRS6), found in Arabidopsis thaliana (Mouse-ear cress).